The chain runs to 63 residues: Large ribosomal subunit protein uL29 (63 aa).

The protein belongs to the universal ribosomal protein uL29 family.

The polypeptide is Large ribosomal subunit protein uL29 (Aliivibrio fischeri (strain ATCC 700601 / ES114) (Vibrio fischeri)).